The sequence spans 137 residues: Phosphoribosyl-AMP cyclohydrolase (137 aa).

D83 contacts Mg(2+). C84 is a Zn(2+) binding site. The Mg(2+) site is built by D85 and D87. Zn(2+) contacts are provided by C101 and C108.

The protein belongs to the PRA-CH family. Homodimer. Mg(2+) serves as cofactor. Requires Zn(2+) as cofactor.

It is found in the cytoplasm. The enzyme catalyses 1-(5-phospho-beta-D-ribosyl)-5'-AMP + H2O = 1-(5-phospho-beta-D-ribosyl)-5-[(5-phospho-beta-D-ribosylamino)methylideneamino]imidazole-4-carboxamide. It functions in the pathway amino-acid biosynthesis; L-histidine biosynthesis; L-histidine from 5-phospho-alpha-D-ribose 1-diphosphate: step 3/9. In terms of biological role, catalyzes the hydrolysis of the adenine ring of phosphoribosyl-AMP. This Burkholderia mallei (strain ATCC 23344) protein is Phosphoribosyl-AMP cyclohydrolase.